The following is a 122-amino-acid chain: Small ribosomal subunit protein uS13 (122 aa).

Residues 95–122 (NLPVRGQRTHTNARTRKGKAKPIAGKKK) form a disordered region.

The protein belongs to the universal ribosomal protein uS13 family. As to quaternary structure, part of the 30S ribosomal subunit. Forms a loose heterodimer with protein S19. Forms two bridges to the 50S subunit in the 70S ribosome.

Functionally, located at the top of the head of the 30S subunit, it contacts several helices of the 16S rRNA. In the 70S ribosome it contacts the 23S rRNA (bridge B1a) and protein L5 of the 50S subunit (bridge B1b), connecting the 2 subunits; these bridges are implicated in subunit movement. Contacts the tRNAs in the A and P-sites. The protein is Small ribosomal subunit protein uS13 of Methylobacterium sp. (strain 4-46).